The following is a 288-amino-acid chain: MPSPKARSGSGRSGSVPCPGGNGRYEFISLNRTPPSPVPPQLLQRQGSDPTTARLRASESPVRRRGSGSSNSSTGGGGQQLPEEDCMRLNPSFFGIALSSLLAIDLWLSKRLGVCACEDSSWGSVRPLMKLIEVSGHGIPWLAGAAYCLYKSDSPAGQEVMLNLLMALVLDVVLVGVLKAVVRRRRPAHNRMDMFATFSVDSYSFPSGHATRAAMCARFLLNHLVLAAPLRVLVLLWATIVGFSRVLLGRHNVTDVAFGFFMGYWQYNLVEMLWLSPVMLQSAIGQLH.

The tract at residues 1–82 (MPSPKARSGS…STGGGGQQLP (82 aa)) is disordered. At 1-127 (MPSPKARSGS…EDSSWGSVRP (127 aa)) the chain is on the cytoplasmic side. A helical membrane pass occupies residues 128–148 (LMKLIEVSGHGIPWLAGAAYC). Residues 149–161 (LYKSDSPAGQEVM) are Lumenal-facing. Residues 162 to 182 (LNLLMALVLDVVLVGVLKAVV) traverse the membrane as a helical segment. The phosphatase sequence motif I stretch occupies residues 179-187 (KAVVRRRRP). Topologically, residues 183–223 (RRRRPAHNRMDMFATFSVDSYSFPSGHATRAAMCARFLLNH) are cytoplasmic. The interval 206–209 (PSGH) is phosphatase sequence motif II. The active-site Proton donors is the His209. A helical membrane pass occupies residues 224 to 244 (LVLAAPLRVLVLLWATIVGFS). The segment at 244–255 (SRVLLGRHNVTD) is phosphatase sequence motif III. Over 245–255 (RVLLGRHNVTD) the chain is Lumenal. His251 (nucleophile) is an active-site residue. A helical membrane pass occupies residues 256-276 (VAFGFFMGYWQYNLVEMLWLS). The Cytoplasmic segment spans residues 277–288 (PVMLQSAIGQLH).

It belongs to the PA-phosphatase related phosphoesterase family.

Its subcellular location is the endoplasmic reticulum membrane. It is found in the nucleus envelope. The protein resides in the nucleus inner membrane. The enzyme catalyses presqualene diphosphate + H2O = presqualene phosphate + phosphate + H(+). It carries out the reaction presqualene phosphate + H2O = presqualene alcohol + phosphate. The catalysed reaction is (2E,6E)-farnesyl diphosphate + H2O = (2E,6E)-farnesyl phosphate + phosphate + H(+). It catalyses the reaction (2E,6E)-farnesyl phosphate + H2O = (2E,6E)-farnesol + phosphate. The enzyme catalyses (2E,6E,10E)-geranylgeranyl diphosphate + H2O = (2E,6E,10E)-geranylgeranyl phosphate + phosphate + H(+). It carries out the reaction (2E,6E,10E)-geranylgeranyl phosphate + H2O = (2E,6E,10E)-geranylgeraniol + phosphate. The catalysed reaction is (2E)-geranyl diphosphate + H2O = (2E)-geranyl phosphate + phosphate + H(+). It catalyses the reaction (2E)-geranyl phosphate + H2O = (2E)-geraniol + phosphate. The enzyme catalyses 1,2-dihexadecanoyl-sn-glycero-3-phosphate + H2O = 1,2-dihexadecanoyl-sn-glycerol + phosphate. Functionally, magnesium-independent polyisoprenoid diphosphatase that catalyzes the sequential dephosphorylation of presqualene, farnesyl, geranyl and geranylgeranyl diphosphates. May regulate the biosynthesis of cholesterol and related sterols by dephosphorylating presqualene and farnesyl diphosphate, two key intermediates in this biosynthetic pathway. May also play a role in protein prenylation by acting on farnesyl diphosphate and its derivative geranylgeranyl diphosphate, two precursors for the addition of isoprenoid anchors to membrane proteins. Has a lower activity towards phosphatidic acid (PA), but through phosphatidic acid dephosphorylation may participate in the biosynthesis of phospholipids and triacylglycerols. May also act on ceramide-1-P, lysophosphatidic acid (LPA) and sphing-4-enine 1-phosphate/sphingosine-1-phosphate. The sequence is that of Polyisoprenoid diphosphate/phosphate phosphohydrolase PLPP6 (plpp6) from Danio rerio (Zebrafish).